The chain runs to 304 residues: MSASTAAPARDRLRIAIQKNGRLAEPARSLLAACGLSWRQSRDKLFCYGESLPVDLLLVRDDDIPGLIADGVCDLGIVGQNELDEQASARRRAGLPAAYHAVRGVGFGQCRLMLAVPEEWDWQGVAQLAGKRIATSYPAILADWLERQGIDASVVELSGSVEIAPRLGTADLICDLVSSGATLAANQLKPVELVMESEAVLAGAVREPADARAALLAMLLRRMDGVLKLRDSKLLMFRAEQGNVDALRRLLPDADPLVQLPDDGNGALRLQTMCHGAVTWQRLEELERAGAQGLMVLTVERSLA.

The protein belongs to the ATP phosphoribosyltransferase family. Long subfamily. Mg(2+) serves as cofactor.

Its subcellular location is the cytoplasm. It carries out the reaction 1-(5-phospho-beta-D-ribosyl)-ATP + diphosphate = 5-phospho-alpha-D-ribose 1-diphosphate + ATP. The protein operates within amino-acid biosynthesis; L-histidine biosynthesis; L-histidine from 5-phospho-alpha-D-ribose 1-diphosphate: step 1/9. Feedback inhibited by histidine. In terms of biological role, catalyzes the condensation of ATP and 5-phosphoribose 1-diphosphate to form N'-(5'-phosphoribosyl)-ATP (PR-ATP). Has a crucial role in the pathway because the rate of histidine biosynthesis seems to be controlled primarily by regulation of HisG enzymatic activity. This chain is ATP phosphoribosyltransferase, found in Xanthomonas campestris pv. campestris (strain 8004).